We begin with the raw amino-acid sequence, 77 residues long: MKEQKLIHEGLITESLPNGMFRVRLDNEDLILGYVSGRIRRSFIRILPGDRVKIEVSRYDSTRGRIIYRLRNKDSND.

In terms of domain architecture, S1-like spans 1-71 (MKEQKLIHEG…TRGRIIYRLR (71 aa)).

This sequence belongs to the IF-1 family. Component of the 30S ribosomal translation pre-initiation complex which assembles on the 30S ribosome in the order IF-2 and IF-3, IF-1 and N-formylmethionyl-tRNA(fMet); mRNA recruitment can occur at any time during PIC assembly.

The protein localises to the plastid. The protein resides in the chloroplast. Its function is as follows. One of the essential components for the initiation of protein synthesis. Stabilizes the binding of IF-2 and IF-3 on the 30S subunit to which N-formylmethionyl-tRNA(fMet) subsequently binds. Helps modulate mRNA selection, yielding the 30S pre-initiation complex (PIC). Upon addition of the 50S ribosomal subunit IF-1, IF-2 and IF-3 are released leaving the mature 70S translation initiation complex. This is Translation initiation factor IF-1, chloroplastic from Liriodendron tulipifera (Tuliptree).